We begin with the raw amino-acid sequence, 806 residues long: Leucine--tRNA ligase (806 aa).

Residues 38 to 48 (PYPSGEIHMGH) carry the 'HIGH' region motif. The 'KMSKS' region motif lies at 572 to 576 (KMSKS). Residue K575 coordinates ATP.

Belongs to the class-I aminoacyl-tRNA synthetase family.

The protein resides in the cytoplasm. It carries out the reaction tRNA(Leu) + L-leucine + ATP = L-leucyl-tRNA(Leu) + AMP + diphosphate. The sequence is that of Leucine--tRNA ligase from Helicobacter pylori (strain ATCC 700392 / 26695) (Campylobacter pylori).